Consider the following 209-residue polypeptide: Glutathione S-transferase 1-1 (209 aa).

The region spanning 1–81 (MADFYYLPGS…YLVEKYGKTD (81 aa)) is the GST N-terminal domain. Residues Ser10, 51–53 (HTI), and 65–67 (ESR) each bind glutathione. In terms of domain architecture, GST C-terminal spans 87–209 (CPKKRAVINQ…GCLEFKKYFE (123 aa)).

It belongs to the GST superfamily. Theta family. In terms of assembly, homodimer.

It carries out the reaction RX + glutathione = an S-substituted glutathione + a halide anion + H(+). It catalyses the reaction 1,1,1-trichloro-2,2-bis(4-chlorophenyl)ethane = 1,1-dichloro-2,2-bis(4-chlorophenyl)ethylene + chloride + H(+). Conjugation of reduced glutathione to a wide number of exogenous and endogenous hydrophobic electrophiles. Has DDT dehydrochlorinase activity. This is Glutathione S-transferase 1-1 (GstD1) from Drosophila simulans (Fruit fly).